Here is a 204-residue protein sequence, read N- to C-terminus: Large ribosomal subunit protein bL25 (204 aa).

It belongs to the bacterial ribosomal protein bL25 family. CTC subfamily. In terms of assembly, part of the 50S ribosomal subunit; part of the 5S rRNA/L5/L18/L25 subcomplex. Contacts the 5S rRNA. Binds to the 5S rRNA independently of L5 and L18.

Functionally, this is one of the proteins that binds to the 5S RNA in the ribosome where it forms part of the central protuberance. The chain is Large ribosomal subunit protein bL25 from Pseudomonas paraeruginosa (strain DSM 24068 / PA7) (Pseudomonas aeruginosa (strain PA7)).